Reading from the N-terminus, the 550-residue chain is Lariat debranching enzyme (550 aa).

A divalent metal cation-binding residues include C8 and H10. Phosphoserine is present on S28. D39 and N84 together coordinate a divalent metal cation. Residues 124–154 (SGIFKSHDYRKGHFECPPYNSSTIRSIYHVR) are lariat recognition loop. K128 carries the N6-acetyllysine modification. A divalent metal cation is bound by residues H174, H226, and H228. Residues 390-550 (EHHQCGEYEQ…AVDDGDASAE (161 aa)) are disordered. The span at 416-426 (NTDTSALSSIN) shows a compositional bias: polar residues. The segment covering 430-445 (IMLDEEEEEEEEEEEA) has biased composition (acidic residues). Polar residues predominate over residues 450–483 (SDMNTPSVEPASDQASDLSTSFSDIRNLPSSMFV). Phosphoserine occurs at positions 470, 480, 484, 485, 489, 491, 494, 505, and 520. Over residues 498 to 528 (KCGETVESGDEKDLAKFPLKRLSDEHEPEQR) the composition is skewed to basic and acidic residues.

This sequence belongs to the lariat debranching enzyme family. It depends on Fe(2+) as a cofactor. The cofactor is Zn(2+). Requires Mn(2+) as cofactor.

Its subcellular location is the nucleus. Active in presence of diverse metals including Fe(2+), Zn(2+), Mn(2+). Also activated by Ca(2+). Binds two metal cations in two adjacent alpha and beta metal-binding pockets. In terms of biological role, cleaves the 2'-5' phosphodiester linkage at the branch point of excised lariat intron RNA and converts them into linear molecules that can be subsequently degraded, thereby facilitating ribonucleotide turnover. Linked to its role in pre-mRNA processing mechanism, may also participate in retrovirus replication and have an antiviral cell-intrinsic defense function. This chain is Lariat debranching enzyme (Dbr1), found in Mus musculus (Mouse).